Here is a 621-residue protein sequence, read N- to C-terminus: Intermediate filament protein ifc-2 (621 aa).

Positions 20-55 are head; it reads SGAYTSGFGGLVSGMSSAGAICTTQIRDAREREKRE. The IF rod domain maps to 52-400; it reads EKREIGLLND…VLLNGANVTT (349 aa). The interval 56 to 87 is coil 1A; the sequence is IGLLNDRLADYIEKVRFLEAQNQCLSHDIDIL. Residues 88 to 100 form a linker 1 region; the sequence is RRGFSGGGHVSGL. Residues 101-238 form a coil 1B region; that stretch reads YDTEIAQAKR…TENSTRIEQE (138 aa). A linker 12 region spans residues 239–256; that stretch reads LVFIRRDTTAENRDYFRH. The segment at 257 to 400 is coil 2; it reads ELQAAIRDIR…VLLNGANVTT (144 aa). The tail stretch occupies residues 401–549; the sequence is YVSNTHPSGV…RVDVGGFRVE (149 aa). The LTD domain occupies 508 to 621; the sequence is SGRSFHSWYL…EERAWFVYLN (114 aa).

The protein belongs to the intermediate filament family.

Its subcellular location is the cytoplasm. Functionally, cytoplasmic intermediate filaments provide mechanical strength to cells. The polypeptide is Intermediate filament protein ifc-2 (Caenorhabditis briggsae).